A 203-amino-acid polypeptide reads, in one-letter code: Large ribosomal subunit protein bL25 (203 aa).

This sequence belongs to the bacterial ribosomal protein bL25 family. CTC subfamily. In terms of assembly, part of the 50S ribosomal subunit; part of the 5S rRNA/L5/L18/L25 subcomplex. Contacts the 5S rRNA. Binds to the 5S rRNA independently of L5 and L18.

In terms of biological role, this is one of the proteins that binds to the 5S RNA in the ribosome where it forms part of the central protuberance. This chain is Large ribosomal subunit protein bL25, found in Rickettsia africae (strain ESF-5).